Consider the following 205-residue polypeptide: Non-specific lipid transfer protein GPI-anchored 21 (205 aa).

Residues 1–27 form the signal peptide; it reads MNSNSFLISAALIFSLLSSNSPTSILA. 4 disulfide bridges follow: C33–C75, C44–C59, C60–C100, and C73–C109. A glycan (N-linked (GlcNAc...) asparagine) is linked at N89. A disordered region spans residues 116-182; the sequence is LPTPGPASFG…FAPPPPSSSP (67 aa). Positions 126–156 are enriched in low complexity; that stretch reads PTTSPTDSQTSDPEGSASFRPPTSPTTSQTP. The GPI-anchor amidated serine moiety is linked to residue S179. The propeptide at 180 to 205 is removed in mature form; sequence SSPSSSHSLKLSYLLFAFAFTIIKFI.

This sequence belongs to the plant LTP family.

It localises to the cell membrane. Functionally, probable lipid transfer protein. This is Non-specific lipid transfer protein GPI-anchored 21 from Arabidopsis thaliana (Mouse-ear cress).